A 282-amino-acid polypeptide reads, in one-letter code: Large ribosomal subunit protein uL2 (282 aa).

Residues 230-282 (AMNPIDHPLGGGEGRSSGGRHPVSPWGMPAKGYKTRDKKKASSRLIVKRRGQK) form a disordered region. A compositionally biased stretch (basic residues) spans 265 to 282 (RDKKKASSRLIVKRRGQK).

This sequence belongs to the universal ribosomal protein uL2 family. In terms of assembly, part of the 50S ribosomal subunit. Forms a bridge to the 30S subunit in the 70S ribosome.

Functionally, one of the primary rRNA binding proteins. Required for association of the 30S and 50S subunits to form the 70S ribosome, for tRNA binding and peptide bond formation. It has been suggested to have peptidyltransferase activity; this is somewhat controversial. Makes several contacts with the 16S rRNA in the 70S ribosome. This chain is Large ribosomal subunit protein uL2, found in Desulfovibrio desulfuricans (strain ATCC 27774 / DSM 6949 / MB).